Consider the following 422-residue polypeptide: Transcription initiation factor TFIID subunit 15b (422 aa).

Disordered regions lie at residues 1-24 (MAGM…DGYG), 47-94 (YGGR…PNPS), 111-263 (ALAP…DAAT), and 368-422 (MAEK…SRPY). Composition is skewed to gly residues over residues 8 to 24 (DGGG…DGYG) and 47 to 83 (YGGR…GGGG). A RanBP2-type zinc finger spans residues 84–115 (RDGDWRCPNPSCGNVNFARRVECNKCGALAPS). Positions 123–133 (DRGGGGYSRGG) are enriched in gly residues. Basic and acidic residues predominate over residues 134–156 (GDSDRGGGRGGRNDSGRSYESSR). Gly residues-rich tracts occupy residues 219 to 229 (PSYGGPRGGYG) and 236 to 247 (GGRGGRSGGYDG). The segment covering 252 to 263 (RRQEASYEDAAT) has biased composition (basic and acidic residues). One can recognise an RRM domain in the interval 280 to 371 (ARIYISNLPP…NKISVTMAEK (92 aa)). The segment covering 382–397 (RGGGRGGGGGGYGGGG) has biased composition (gly residues).

The protein belongs to the TAF15 family. In terms of assembly, component of the TFIID complex. TFIID is composed of TATA binding protein (TBP) and a number of TBP-associated factors (TAFs) whose MWs range from 14-217 kDa. Interacts with TAF4, TAF4B, TAF5, TAF12B and TAF14. As to expression, expressed in roots, leaves and inflorescences.

It is found in the nucleus. In terms of biological role, TAFs are components of the transcription factor IID (TFIID) complex that is essential for mediating regulation of RNA polymerase transcription. In Arabidopsis thaliana (Mouse-ear cress), this protein is Transcription initiation factor TFIID subunit 15b (TAF15B).